Here is a 582-residue protein sequence, read N- to C-terminus: ATP-dependent lipid A-core flippase (582 aa).

Helical transmembrane passes span 23-43, 61-81, 140-160, 163-183, 247-267, and 273-293; these read AAFI…TLFL, ILLY…SLNV, AVLV…LMFY, WQLS…VGVV, AIST…VLVI, and MLGE…IMLL. The ABC transmembrane type-1 domain occupies 26–308; it reads IAAILCMIGY…LTNVNSDFQR (283 aa). The 237-residue stretch at 340 to 576 folds into the ABC transporter domain; that stretch reads IVFDDVTFSY…EGAYFQLHNL (237 aa). ATP is bound at residue 374 to 381; the sequence is GRSGSGKS.

The protein belongs to the ABC transporter superfamily. Lipid exporter (TC 3.A.1.106) family. As to quaternary structure, homodimer.

It is found in the cell inner membrane. The catalysed reaction is ATP + H2O + lipid A-core oligosaccharideSide 1 = ADP + phosphate + lipid A-core oligosaccharideSide 2.. Functionally, involved in lipopolysaccharide (LPS) biosynthesis. Translocates lipid A-core from the inner to the outer leaflet of the inner membrane. Transmembrane domains (TMD) form a pore in the inner membrane and the ATP-binding domain (NBD) is responsible for energy generation. This Idiomarina loihiensis (strain ATCC BAA-735 / DSM 15497 / L2-TR) protein is ATP-dependent lipid A-core flippase.